The primary structure comprises 321 residues: o-succinylbenzoate synthase (321 aa).

K134 functions as the Proton donor in the catalytic mechanism. Residues D162, E191, and D214 each coordinate Mg(2+). K236 serves as the catalytic Proton acceptor.

Belongs to the mandelate racemase/muconate lactonizing enzyme family. MenC type 1 subfamily. It depends on a divalent metal cation as a cofactor.

It carries out the reaction (1R,6R)-6-hydroxy-2-succinyl-cyclohexa-2,4-diene-1-carboxylate = 2-succinylbenzoate + H2O. It functions in the pathway quinol/quinone metabolism; 1,4-dihydroxy-2-naphthoate biosynthesis; 1,4-dihydroxy-2-naphthoate from chorismate: step 4/7. It participates in quinol/quinone metabolism; menaquinone biosynthesis. In terms of biological role, converts 2-succinyl-6-hydroxy-2,4-cyclohexadiene-1-carboxylate (SHCHC) to 2-succinylbenzoate (OSB). This chain is o-succinylbenzoate synthase, found in Klebsiella pneumoniae (strain 342).